The following is a 156-amino-acid chain: Small ribosomal subunit protein uS7A/uS7B (156 aa).

It belongs to the universal ribosomal protein uS7 family. As to quaternary structure, part of the 30S ribosomal subunit. Contacts proteins S9 and S11.

One of the primary rRNA binding proteins, it binds directly to 16S rRNA where it nucleates assembly of the head domain of the 30S subunit. Is located at the subunit interface close to the decoding center, probably blocks exit of the E-site tRNA. The polypeptide is Small ribosomal subunit protein uS7A/uS7B (Cereibacter sphaeroides (strain ATCC 17029 / ATH 2.4.9) (Rhodobacter sphaeroides)).